The primary structure comprises 229 residues: Protein-L-isoaspartate O-methyltransferase (229 aa).

Ser-65 is an active-site residue.

The protein belongs to the methyltransferase superfamily. L-isoaspartyl/D-aspartyl protein methyltransferase family.

The protein localises to the cytoplasm. It catalyses the reaction [protein]-L-isoaspartate + S-adenosyl-L-methionine = [protein]-L-isoaspartate alpha-methyl ester + S-adenosyl-L-homocysteine. Its function is as follows. Catalyzes the methyl esterification of L-isoaspartyl residues in peptides and proteins that result from spontaneous decomposition of normal L-aspartyl and L-asparaginyl residues. It plays a role in the repair and/or degradation of damaged proteins. In Chlorobium phaeovibrioides (strain DSM 265 / 1930) (Prosthecochloris vibrioformis (strain DSM 265)), this protein is Protein-L-isoaspartate O-methyltransferase.